The sequence spans 135 residues: Probable 5-hydroxyisourate hydrolase R09H10.3 (135 aa).

A signal peptide spans 1–20 (MNKFSLFFALTATLMTITES). Positions 30, 68, and 132 each coordinate substrate.

The protein belongs to the transthyretin family. 5-hydroxyisourate hydrolase subfamily. In terms of assembly, homotetramer.

The enzyme catalyses 5-hydroxyisourate + H2O = 5-hydroxy-2-oxo-4-ureido-2,5-dihydro-1H-imidazole-5-carboxylate + H(+). Catalyzes the hydrolysis of 5-hydroxyisourate (HIU) to 2-oxo-4-hydroxy-4-carboxy-5-ureidoimidazoline (OHCU). In Caenorhabditis elegans, this protein is Probable 5-hydroxyisourate hydrolase R09H10.3.